Reading from the N-terminus, the 54-residue chain is IATVDCSDYPKPACSLDYMPLCGSDSKTYSNKCNFCNAVVDSNGTLTLSHFEKC.

One can recognise a Kazal-like domain in the interval 4 to 54; that stretch reads VDCSDYPKPACSLDYMPLCGSDSKTYSNKCNFCNAVVDSNGTLTLSHFEKC. Disulfide bonds link C6–C36, C14–C33, and C22–C54. A glycan (N-linked (GlcNAc...) asparagine) is linked at N43.

It is found in the secreted. The protein is Ovomucoid of Chroicocephalus ridibundus (Black-headed gull).